A 230-amino-acid polypeptide reads, in one-letter code: Ribosomal RNA small subunit methyltransferase G (230 aa).

S-adenosyl-L-methionine contacts are provided by residues G74, F79, 124–125 (AE), and R141.

It belongs to the methyltransferase superfamily. RNA methyltransferase RsmG family.

The protein resides in the cytoplasm. Functionally, specifically methylates the N7 position of a guanine in 16S rRNA. This is Ribosomal RNA small subunit methyltransferase G from Acholeplasma laidlawii (strain PG-8A).